The following is a 2832-amino-acid chain: Cyclic beta-(1,2)-glucan synthase NdvB (2832 aa).

The next 7 membrane-spanning stretches (helical) occupy residues 411–431 (FAIAGPNILLTILAMIVVYAF), 444–464 (IMLLLFALPASEGAMGLFNTV), 810–830 (LIPVAWLAASVMGWYYMEPTP), 831–851 (ALIWQLVLIFSLFVAPTLSLI), 880–900 (QVALRIVFIAHNAAMMADAIV), 938–958 (WTAPALALVSLALAAISDTGL), and 959–979 (PFIGLPFALIWAASPAVAWFV). The 208-residue stretch at 1299 to 1506 (LASEARLTSL…NGQLREWFHA (208 aa)) folds into the Glycoamylase-like domain.

Belongs to the NdvB family.

The protein resides in the cell inner membrane. The catalysed reaction is [(1-&gt;2)-beta-D-glucosyl](n) + UDP-alpha-D-glucose = [(1-&gt;2)-beta-D-glucosyl](n+1) + UDP + H(+). Involved in the biosynthesis of cyclic beta-(1,2)-glucan. It seems that NdvB is involved in three enzymatic activities. First, it may catalyze the transfer of the first glucose from UDP-Glc to an unknown amino acid. In the second enzymatic activity (UDP-Glc:beta-(1,2) oligosaccharide glucosyltransferase), it may be responsible for chain elongation. Finally, in the third activity, it may catalyze glucan cyclization and release from the protein. NdvB is also involved in nodule invasion and in bacteroid development. This Rhizobium meliloti (strain 1021) (Ensifer meliloti) protein is Cyclic beta-(1,2)-glucan synthase NdvB.